The sequence spans 186 residues: HTH-type transcriptional regulator Hpr (186 aa).

The region spanning 13–157 is the HTH marR-type domain; that stretch reads AMLYSQRIAQ…VMAVIRNIYG (145 aa). The H-T-H motif DNA-binding region spans 63–86; sequence ISDVAKFGVMHVSTAFNFSKKLEE.

As to quaternary structure, homodimer.

Negative regulator of protease production and sporulation. The sequence is that of HTH-type transcriptional regulator Hpr from Lysinibacillus sphaericus (strain C3-41).